We begin with the raw amino-acid sequence, 270 residues long: Fluoride-specific ion channel FluC 2 (270 aa).

4 consecutive transmembrane segments (helical) span residues 4-24, 35-55, 67-87, and 96-116; these read IIIL…FIML, LDIL…TALY, IIGT…YGSV, and AFLI…VAVL. The Na(+) site is built by glycine 74 and serine 77.

This sequence belongs to the fluoride channel Fluc/FEX (TC 1.A.43) family.

Its subcellular location is the cell inner membrane. The catalysed reaction is fluoride(in) = fluoride(out). Its activity is regulated as follows. Na(+) is not transported, but it plays an essential structural role and its presence is essential for fluoride channel function. Functionally, fluoride-specific ion channel. Important for reducing fluoride concentration in the cell, thus reducing its toxicity. This Brucella melitensis biotype 1 (strain ATCC 23456 / CCUG 17765 / NCTC 10094 / 16M) protein is Fluoride-specific ion channel FluC 2.